The chain runs to 951 residues: UvrABC system protein A (951 aa).

33–40 (GLSGSGKS) is a binding site for ATP. The C4-type zinc-finger motif lies at 252–279 (CPICGFTVGELEPRLFSFNAPQGACPDC). 2 consecutive ABC transporter domains span residues 309–587 (WNPI…RKSL) and 607–935 (GNGK…QYLK). 639–646 (GVSGSGKS) is an ATP binding site. The segment at 738–764 (CEACHGDGILKIEMNFLPDVFVPCEVC) adopts a C4-type zinc-finger fold.

It belongs to the ABC transporter superfamily. UvrA family. Forms a heterotetramer with UvrB during the search for lesions.

The protein localises to the cytoplasm. The UvrABC repair system catalyzes the recognition and processing of DNA lesions. UvrA is an ATPase and a DNA-binding protein. A damage recognition complex composed of 2 UvrA and 2 UvrB subunits scans DNA for abnormalities. When the presence of a lesion has been verified by UvrB, the UvrA molecules dissociate. The polypeptide is UvrABC system protein A (Lactiplantibacillus plantarum (strain ATCC BAA-793 / NCIMB 8826 / WCFS1) (Lactobacillus plantarum)).